A 231-amino-acid polypeptide reads, in one-letter code: Orotidine 5'-phosphate decarboxylase (231 aa).

Substrate is bound by residues aspartate 11, lysine 33, 60–69, threonine 117, arginine 178, glutamine 187, glycine 207, and arginine 208; that span reads DLKFHDIPNT. The Proton donor role is filled by lysine 62.

Belongs to the OMP decarboxylase family. Type 1 subfamily. Homodimer.

It catalyses the reaction orotidine 5'-phosphate + H(+) = UMP + CO2. The protein operates within pyrimidine metabolism; UMP biosynthesis via de novo pathway; UMP from orotate: step 2/2. In terms of biological role, catalyzes the decarboxylation of orotidine 5'-monophosphate (OMP) to uridine 5'-monophosphate (UMP). This chain is Orotidine 5'-phosphate decarboxylase, found in Nitrosomonas eutropha (strain DSM 101675 / C91 / Nm57).